Reading from the N-terminus, the 223-residue chain is Endonuclease V (223 aa).

Positions 35 and 103 each coordinate Mg(2+).

The protein belongs to the endonuclease V family. The cofactor is Mg(2+).

Its subcellular location is the cytoplasm. The enzyme catalyses Endonucleolytic cleavage at apurinic or apyrimidinic sites to products with a 5'-phosphate.. Functionally, DNA repair enzyme involved in the repair of deaminated bases. Selectively cleaves double-stranded DNA at the second phosphodiester bond 3' to a deoxyinosine leaving behind the intact lesion on the nicked DNA. In Escherichia coli O139:H28 (strain E24377A / ETEC), this protein is Endonuclease V.